The sequence spans 702 residues: Methionine--tRNA ligase (702 aa).

A 'HIGH' region motif is present at residues 14-24; sequence PYANGPVHLGH. Residues cysteine 146, cysteine 149, cysteine 159, and cysteine 162 each coordinate Zn(2+). Residues 344-348 carry the 'KMSKS' region motif; it reads KFSKS. Lysine 347 is a binding site for ATP. In terms of domain architecture, tRNA-binding spans 601–702; it reads EFLKVDLRVA…GKEINGKKIQ (102 aa).

It belongs to the class-I aminoacyl-tRNA synthetase family. MetG type 1 subfamily. Homodimer. The cofactor is Zn(2+).

Its subcellular location is the cytoplasm. It catalyses the reaction tRNA(Met) + L-methionine + ATP = L-methionyl-tRNA(Met) + AMP + diphosphate. Functionally, is required not only for elongation of protein synthesis but also for the initiation of all mRNA translation through initiator tRNA(fMet) aminoacylation. The sequence is that of Methionine--tRNA ligase from Chlorobium phaeobacteroides (strain DSM 266 / SMG 266 / 2430).